Reading from the N-terminus, the 167-residue chain is RNA pyrophosphohydrolase (167 aa).

The region spanning 8–158 (PYRTCVGMML…KRPVYERVVK (151 aa)) is the Nudix hydrolase domain. Positions 47–68 (GGVDPGEDTWEAAKRELYEETN) match the Nudix box motif.

It belongs to the Nudix hydrolase family. RppH subfamily. Requires a divalent metal cation as cofactor.

Functionally, accelerates the degradation of transcripts by removing pyrophosphate from the 5'-end of triphosphorylated RNA, leading to a more labile monophosphorylated state that can stimulate subsequent ribonuclease cleavage. This Rhodopseudomonas palustris (strain HaA2) protein is RNA pyrophosphohydrolase.